The following is a 415-amino-acid chain: UV excision repair protein RAD23 homolog B (415 aa).

A Ubiquitin-like domain is found at 1–79 (MQVTLKTLQQ…VVVMVTKPKA (79 aa)). The segment at 80-175 (VTSAVPATTQ…STPGDSSRSN (96 aa)) is disordered. Low complexity predominate over residues 84 to 143 (VPATTQQSSSPSTTTVSSSPAAAVAQAPAPTPALAPTSTPASTTPASTTASSEPAPTGAT). Threonine 155 carries the phosphothreonine modification. A phosphoserine mark is found at serine 160 and serine 174. The residue at position 186 (threonine 186) is a Phosphothreonine. A UBA 1 domain is found at 188–228 (QSYENMVTEIMSMGYEREQVIAALRASFNNPDRAVEYLLMG). At serine 199 the chain carries Phosphoserine. Phosphotyrosine is present on tyrosine 202. Positions 274–317 (HPLEFLRNQPQFQQMRQIIQQNPSLLPALLQQIGRENPQLLQQI) constitute an STI1 domain. The interval 334-355 (EAGGQGGGGGGGGGGGGGGGGI) is disordered. Over residues 336–355 (GGQGGGGGGGGGGGGGGGGI) the composition is skewed to gly residues. The UBA 2 domain maps to 370-410 (PQEKEAIERLKALGFPEGLVIQAYFACEKNENLAANFLLQQ).

It belongs to the RAD23 family. As to quaternary structure, component of the XPC complex composed of XPC, RAD23B and CETN2. Interacts with NGLY1 and PSMC1. Interacts with ATXN3. Interacts with AMFR. Interacts with VCP; the interaction is indirect and mediated by NGLY1.

It is found in the nucleus. The protein resides in the cytoplasm. Functionally, multiubiquitin chain receptor involved in modulation of proteasomal degradation. Binds to polyubiquitin chains. Proposed to be capable to bind simultaneously to the 26S proteasome and to polyubiquitinated substrates and to deliver ubiquitinated proteins to the proteasome. May play a role in endoplasmic reticulum-associated degradation (ERAD) of misfolded glycoproteins by association with PNGase and delivering deglycosylated proteins to the proteasome. In terms of biological role, involved in global genome nucleotide excision repair (GG-NER) by acting as component of the XPC complex. Cooperatively with Cetn2 appears to stabilize Xpc. May protect Xpc from proteasomal degradation. Its function is as follows. The XPC complex is proposed to represent the first factor bound at the sites of DNA damage and together with other core recognition factors, Xpa, RPA and the TFIIH complex, is part of the pre-incision (or initial recognition) complex. The XPC complex recognizes a wide spectrum of damaged DNA characterized by distortions of the DNA helix such as single-stranded loops, mismatched bubbles or single-stranded overhangs. The orientation of XPC complex binding appears to be crucial for inducing a productive NER. XPC complex is proposed to recognize and to interact with unpaired bases on the undamaged DNA strand which is followed by recruitment of the TFIIH complex and subsequent scanning for lesions in the opposite strand in a 5'-to-3' direction by the NER machinery. Cyclobutane pyrimidine dimers (CPDs) which are formed upon UV-induced DNA damage esacpe detection by the XPC complex due to a low degree of structural perurbation. Instead they are detected by the UV-DDB complex which in turn recruits and cooperates with the XPC complex in the respective DNA repair. In vitro, the XPC:RAD23B dimer is sufficient to initiate NER; it preferentially binds to cisplatin and UV-damaged double-stranded DNA and also binds to a variety of chemically and structurally diverse DNA adducts. XPC:RAD23B contacts DNA both 5' and 3' of a cisplatin lesion with a preference for the 5' side. Xpc:Rad22b induces a bend in DNA upon binding. Xpc:Rad23b stimulates the activity of DNA glycosylases Tdg and Smug1. The protein is UV excision repair protein RAD23 homolog B (Rad23b) of Rattus norvegicus (Rat).